The chain runs to 371 residues: Probable F-box protein At1g65740 (371 aa).

Positions 2–49 (VDWSTLPEELLHFIAARSFSLVEYKRFSSICVSWHSSVSGVKKNPFHR) constitute an F-box domain.

The sequence is that of Probable F-box protein At1g65740 from Arabidopsis thaliana (Mouse-ear cress).